Consider the following 190-residue polypeptide: RNA pyrophosphohydrolase (190 aa).

The Nudix hydrolase domain occupies 6-149; sequence GYRPNVGIIL…KRDVYTQALN (144 aa). The Nudix box signature appears at 38–59; the sequence is GGIKYGESPVQAMYRELHEEVG. The disordered stretch occupies residues 167–190; it reads QRVHGPRSTDNPSSETDGHAHIAG.

The protein belongs to the Nudix hydrolase family. RppH subfamily. Requires a divalent metal cation as cofactor.

Functionally, accelerates the degradation of transcripts by removing pyrophosphate from the 5'-end of triphosphorylated RNA, leading to a more labile monophosphorylated state that can stimulate subsequent ribonuclease cleavage. This is RNA pyrophosphohydrolase from Bordetella parapertussis (strain 12822 / ATCC BAA-587 / NCTC 13253).